Reading from the N-terminus, the 149-residue chain is MSDLSAQKRLAADVLDVGENRVWFDPDAQSEIADAITREDIRELVADGTIDAEDTQGNSRGRARERDAKESYGHKKGAGSRKGKAGARQNEKREYVAGIRAQRQQLRELRDDGTLSPAQYREMYNMANGGEFDSVRRLTNYVEENYGDS.

Residues 45-94 (VADGTIDAEDTQGNSRGRARERDAKESYGHKKGAGSRKGKAGARQNEKRE) form a disordered region. A compositionally biased stretch (basic and acidic residues) spans 62–73 (RARERDAKESYG). Over residues 74–85 (HKKGAGSRKGKA) the composition is skewed to basic residues.

It belongs to the eukaryotic ribosomal protein eL19 family. As to quaternary structure, part of the 50S ribosomal subunit.

Its function is as follows. Binds to the 23S rRNA. In Halobacterium salinarum (strain ATCC 700922 / JCM 11081 / NRC-1) (Halobacterium halobium), this protein is Large ribosomal subunit protein eL19.